The chain runs to 175 residues: ATP synthase subunit delta (175 aa).

Belongs to the ATPase delta chain family. F-type ATPases have 2 components, F(1) - the catalytic core - and F(0) - the membrane proton channel. F(1) has five subunits: alpha(3), beta(3), gamma(1), delta(1), epsilon(1). F(0) has three main subunits: a(1), b(2) and c(10-14). The alpha and beta chains form an alternating ring which encloses part of the gamma chain. F(1) is attached to F(0) by a central stalk formed by the gamma and epsilon chains, while a peripheral stalk is formed by the delta and b chains.

Its subcellular location is the cell membrane. In terms of biological role, f(1)F(0) ATP synthase produces ATP from ADP in the presence of a proton or sodium gradient. F-type ATPases consist of two structural domains, F(1) containing the extramembraneous catalytic core and F(0) containing the membrane proton channel, linked together by a central stalk and a peripheral stalk. During catalysis, ATP synthesis in the catalytic domain of F(1) is coupled via a rotary mechanism of the central stalk subunits to proton translocation. Its function is as follows. This protein is part of the stalk that links CF(0) to CF(1). It either transmits conformational changes from CF(0) to CF(1) or is implicated in proton conduction. This is ATP synthase subunit delta from Lactococcus lactis subsp. cremoris (strain MG1363).